Here is a 384-residue protein sequence, read N- to C-terminus: 8-amino-7-oxononanoate synthase (384 aa).

R21 serves as a coordination point for substrate. Pyridoxal 5'-phosphate is bound at residue 108-109 (GF). Position 133 (H133) interacts with substrate. 3 residues coordinate pyridoxal 5'-phosphate: S179, H207, and T233. At K236 the chain carries N6-(pyridoxal phosphate)lysine. T352 contacts substrate.

Belongs to the class-II pyridoxal-phosphate-dependent aminotransferase family. BioF subfamily. As to quaternary structure, homodimer. Pyridoxal 5'-phosphate serves as cofactor.

The enzyme catalyses 6-carboxyhexanoyl-[ACP] + L-alanine + H(+) = (8S)-8-amino-7-oxononanoate + holo-[ACP] + CO2. It participates in cofactor biosynthesis; biotin biosynthesis. Its function is as follows. Catalyzes the decarboxylative condensation of pimeloyl-[acyl-carrier protein] and L-alanine to produce 8-amino-7-oxononanoate (AON), [acyl-carrier protein], and carbon dioxide. The chain is 8-amino-7-oxononanoate synthase from Escherichia coli (strain K12 / DH10B).